Here is a 294-residue protein sequence, read N- to C-terminus: Homeobox protein Nkx-2.5 (294 aa).

Disordered stretches follow at residues 48–69 (GSEP…PAAF) and 102–122 (EQEK…RRKP). The segment covering 52–69 (PALPELPEPPPAKPPAAF) has biased composition (pro residues). Over residues 102-114 (EQEKRELEDPERP) the composition is skewed to basic and acidic residues. A DNA-binding region (homeobox) is located at residues 119-178 (RRKPRVLFSQAQVYELERRFKQQKYLSAPERDHLANVLKLTSTQVKIWFQNRRYKCKRQR).

The protein belongs to the NK-2 homeobox family. Homodimer (via the homeobox); binds DNA as homodimer.

It localises to the nucleus. Transcription factor required for the development of the heart and the spleen. Implicated in commitment to and/or differentiation of the myocardial lineage. Binds to the core DNA motif of promoter. In Gallus gallus (Chicken), this protein is Homeobox protein Nkx-2.5 (NKX-2.5).